The following is a 109-amino-acid chain: Ribonuclease P protein component (109 aa).

Belongs to the RnpA family. Consists of a catalytic RNA component (M1 or rnpB) and a protein subunit.

The catalysed reaction is Endonucleolytic cleavage of RNA, removing 5'-extranucleotides from tRNA precursor.. In terms of biological role, RNaseP catalyzes the removal of the 5'-leader sequence from pre-tRNA to produce the mature 5'-terminus. It can also cleave other RNA substrates such as 4.5S RNA. The protein component plays an auxiliary but essential role in vivo by binding to the 5'-leader sequence and broadening the substrate specificity of the ribozyme. The polypeptide is Ribonuclease P protein component (Nitratiruptor sp. (strain SB155-2)).